A 440-amino-acid polypeptide reads, in one-letter code: Adenosylhomocysteinase (440 aa).

Positions 64, 139, and 164 each coordinate substrate. Residue 165–167 (TTT) coordinates NAD(+). Residues Lys194 and Asp198 each coordinate substrate. Residues Asn199, 228–233 (GFGDVG), Glu251, Asn286, 307–309 (IGH), and Asn352 contribute to the NAD(+) site.

The protein belongs to the adenosylhomocysteinase family. The cofactor is NAD(+).

The protein localises to the cytoplasm. The enzyme catalyses S-adenosyl-L-homocysteine + H2O = L-homocysteine + adenosine. It participates in amino-acid biosynthesis; L-homocysteine biosynthesis; L-homocysteine from S-adenosyl-L-homocysteine: step 1/1. Its function is as follows. May play a key role in the regulation of the intracellular concentration of adenosylhomocysteine. This chain is Adenosylhomocysteinase, found in Granulibacter bethesdensis (strain ATCC BAA-1260 / CGDNIH1).